The following is a 367-amino-acid chain: Protein RecA (367 aa).

An ATP-binding site is contributed by 73–80; it reads GPESSGKT.

This sequence belongs to the RecA family.

Its subcellular location is the cytoplasm. Functionally, can catalyze the hydrolysis of ATP in the presence of single-stranded DNA, the ATP-dependent uptake of single-stranded DNA by duplex DNA, and the ATP-dependent hybridization of homologous single-stranded DNAs. It interacts with LexA causing its activation and leading to its autocatalytic cleavage. The protein is Protein RecA of Delftia acidovorans (strain DSM 14801 / SPH-1).